We begin with the raw amino-acid sequence, 496 residues long: Probable cytosol aminopeptidase (496 aa).

Mn(2+)-binding residues include lysine 258 and aspartate 263. The active site involves lysine 270. Residues aspartate 281, aspartate 340, and glutamate 342 each coordinate Mn(2+). Arginine 344 is a catalytic residue.

This sequence belongs to the peptidase M17 family. Mn(2+) serves as cofactor.

Its subcellular location is the cytoplasm. It carries out the reaction Release of an N-terminal amino acid, Xaa-|-Yaa-, in which Xaa is preferably Leu, but may be other amino acids including Pro although not Arg or Lys, and Yaa may be Pro. Amino acid amides and methyl esters are also readily hydrolyzed, but rates on arylamides are exceedingly low.. It catalyses the reaction Release of an N-terminal amino acid, preferentially leucine, but not glutamic or aspartic acids.. In terms of biological role, presumably involved in the processing and regular turnover of intracellular proteins. Catalyzes the removal of unsubstituted N-terminal amino acids from various peptides. This is Probable cytosol aminopeptidase from Helicobacter pylori (strain G27).